A 488-amino-acid chain; its full sequence is UDP-N-acetylmuramate--L-alanine ligase (488 aa).

ATP is bound at residue 126–132 (GTHGKTT).

This sequence belongs to the MurCDEF family.

Its subcellular location is the cytoplasm. The enzyme catalyses UDP-N-acetyl-alpha-D-muramate + L-alanine + ATP = UDP-N-acetyl-alpha-D-muramoyl-L-alanine + ADP + phosphate + H(+). The protein operates within cell wall biogenesis; peptidoglycan biosynthesis. Its function is as follows. Cell wall formation. In Cronobacter sakazakii (strain ATCC BAA-894) (Enterobacter sakazakii), this protein is UDP-N-acetylmuramate--L-alanine ligase.